Here is a 159-residue protein sequence, read N- to C-terminus: S-ribosylhomocysteine lyase 1 (159 aa).

3 residues coordinate Fe cation: His-54, His-58, and Cys-124.

The protein belongs to the LuxS family. As to quaternary structure, homodimer. It depends on Fe cation as a cofactor.

It catalyses the reaction S-(5-deoxy-D-ribos-5-yl)-L-homocysteine = (S)-4,5-dihydroxypentane-2,3-dione + L-homocysteine. Functionally, involved in the synthesis of autoinducer 2 (AI-2) which is secreted by bacteria and is used to communicate both the cell density and the metabolic potential of the environment. The regulation of gene expression in response to changes in cell density is called quorum sensing. Catalyzes the transformation of S-ribosylhomocysteine (RHC) to homocysteine (HC) and 4,5-dihydroxy-2,3-pentadione (DPD). In Lactobacillus delbrueckii subsp. bulgaricus (strain ATCC BAA-365 / Lb-18), this protein is S-ribosylhomocysteine lyase 1.